The following is a 324-amino-acid chain: Probable pectinesterase A (324 aa).

Positions 1-19 (MHGSLLKLALLSFSLASSA) are cleaved as a signal peptide. Residue Q142 coordinates substrate. The Proton donor role is filled by D165. Residue D186 is the Nucleophile of the active site. 2 residues coordinate substrate: R246 and W248. Residue N285 is glycosylated (N-linked (GlcNAc...) asparagine).

Belongs to the pectinesterase family.

The protein localises to the secreted. It catalyses the reaction [(1-&gt;4)-alpha-D-galacturonosyl methyl ester](n) + n H2O = [(1-&gt;4)-alpha-D-galacturonosyl](n) + n methanol + n H(+). It functions in the pathway glycan metabolism; pectin degradation; 2-dehydro-3-deoxy-D-gluconate from pectin: step 1/5. Involved in maceration and soft-rotting of plant tissue. In Aspergillus flavus (strain ATCC 200026 / FGSC A1120 / IAM 13836 / NRRL 3357 / JCM 12722 / SRRC 167), this protein is Probable pectinesterase A (pmeA).